Consider the following 833-residue polypeptide: MSFYNHKEIEPKWQGYWAEHHTFKTGTDASKPKFYALDMFPYPSGAGLHVGHPEGYTATDILSRYKRAQGYNVLHPMGWDAFGLPAEQYAMDTGNDPAEFTAENIANFKRQINALGFSYDWDREVNTTDPNYYKWTQWIFTKLYEKGLAYEAEVPVNWVEELGTAIANEEVLPDGTSERGGYPVVRKPMRQWMLKITAYAERLLNDLDELDWPESIKDMQRNWIGKSTGANVTFKVKGTDKEFTVFTTRPDTLFGATFTVLAPEHELVDAITSSEQAEAVANYKHQASLKSDLARTDLAKEKTGVWTGAYAINPVNGKEIPIWIADYVLASYGTGAVMAVPAHDQRDWEFAKQFDLPIVEVLEGGNVAEAAYTEDGLHVNSDFLDGLNKEEAIAKIVAWLEEKGCGQEKVTYRLRDWLFSRQRYWGEPIPIIHWEDGTSTAVPESELPLVLPVTKDIRPSGTGESPLANLTDWLEVTRADGVKGRRETNTMPQWAGSSWYYLRYIDPHNTEKLADEDLLKQWLPVDIYVGGAEHAVLHLLYARFWHKFLYDLGVVPTKEPFQKLFNQGMILGTSYRDHRGALVTTDKVEKRDGSFFHVETGEELEQAPAKMSKSLKNVVNPDDVVEQYGADTLRVYEMFMGPLDASIAWSEEGLEGSRKFLDRVYRLITSKEILAENNGALDKAYNETVKAVTEQIESLKFNTAIAQLMVFVNAANKEDKLYVDYAKGFIQLIAPFAPHLAEELWQTVAETGESISYVAWPTWDESKLVEDEIEIVVQIKGKVRAKLMVAKDLSREELQEIALADEKVKAEIDGKEIVKVISVPNKLVNIVVK.

The 'HIGH' region signature appears at 41–52 (PYPSGAGLHVGH). The 'KMSKS' region signature appears at 610-614 (KMSKS). Position 613 (Lys613) interacts with ATP.

Belongs to the class-I aminoacyl-tRNA synthetase family.

Its subcellular location is the cytoplasm. It carries out the reaction tRNA(Leu) + L-leucine + ATP = L-leucyl-tRNA(Leu) + AMP + diphosphate. The protein is Leucine--tRNA ligase of Streptococcus pneumoniae serotype 19F (strain G54).